A 379-amino-acid polypeptide reads, in one-letter code: Chaperone protein DnaJ (379 aa).

In terms of domain architecture, J spans aspartate 5–glycine 70. Residues glycine 134–serine 212 form a CR-type zinc finger. Zn(2+) is bound by residues cysteine 147, cysteine 150, cysteine 164, cysteine 167, cysteine 186, cysteine 189, cysteine 200, and cysteine 203. CXXCXGXG motif repeat units lie at residues cysteine 147–glycine 154, cysteine 164–glycine 171, cysteine 186–glycine 193, and cysteine 200–glycine 207.

The protein belongs to the DnaJ family. As to quaternary structure, homodimer. Zn(2+) serves as cofactor.

The protein localises to the cytoplasm. Its function is as follows. Participates actively in the response to hyperosmotic and heat shock by preventing the aggregation of stress-denatured proteins and by disaggregating proteins, also in an autonomous, DnaK-independent fashion. Unfolded proteins bind initially to DnaJ; upon interaction with the DnaJ-bound protein, DnaK hydrolyzes its bound ATP, resulting in the formation of a stable complex. GrpE releases ADP from DnaK; ATP binding to DnaK triggers the release of the substrate protein, thus completing the reaction cycle. Several rounds of ATP-dependent interactions between DnaJ, DnaK and GrpE are required for fully efficient folding. Also involved, together with DnaK and GrpE, in the DNA replication of plasmids through activation of initiation proteins. This Pectobacterium atrosepticum (strain SCRI 1043 / ATCC BAA-672) (Erwinia carotovora subsp. atroseptica) protein is Chaperone protein DnaJ.